The following is a 138-amino-acid chain: Basic phospholipase A2 ammodytoxin C (138 aa).

Residues 1–16 (MRTLWIVAVCLIGVEG) form the signal peptide. Intrachain disulfides connect Cys-42/Cys-131, Cys-44/Cys-60, Cys-59/Cys-111, Cys-65/Cys-138, Cys-66/Cys-104, Cys-73/Cys-97, and Cys-91/Cys-102. Residues Tyr-43, Gly-45, and Gly-47 each contribute to the Ca(2+) site. Residue His-63 is part of the active site. Asp-64 contributes to the Ca(2+) binding site. Asp-105 is a catalytic residue.

It belongs to the phospholipase A2 family. Group II subfamily. D49 sub-subfamily. In terms of assembly, monomer. Binds to calmodulin, coagulation factor X (F10), 14-3-3 proteins gamma (YWHAG) and epsilon (YWHAE), and R25, a mitochondrial membrane protein. May bind to M-type PLA2 receptor (R-180). It depends on Ca(2+) as a cofactor. In terms of tissue distribution, expressed by the venom gland.

The protein resides in the secreted. It localises to the host cytoplasm. Its subcellular location is the host cytosol. The catalysed reaction is a 1,2-diacyl-sn-glycero-3-phosphocholine + H2O = a 1-acyl-sn-glycero-3-phosphocholine + a fatty acid + H(+). Snake venom phospholipase A2 (PLA2) that acts as a presynaptic neurotoxin, an inhibitor of blood coagulation, and has been found to bind with high affinity to intracellular proteins. The response of indirectly stimulated neuromuscular preparations to ammodytoxin (Atx) is triphasic. The first phase, the transient inhibition of the acetylcholine (ACh) release, starts soon after the addition of Atx and lasts for several minutes. This phase is probably independent of Atx enzymatic activity. The effect may be due to the specific binding of the toxin to presynaptic receptors. These receptors, called N-type receptors, are still unidentified. It is noteworthy that a neuronal isoform of the M-type PLA2 receptor (R180) has been identified as a high-affinity receptor for Atx in neuronal plasma membranes. It was demonstrated however that this receptor is not essential for expression of neurotoxicity by Atx. The second phase corresponds to an augmentation of neurotransmitter release. A peak is reached 10-20 minutes after exposure of the preparation to Atx and is followed by a gradual reduction. In this phase, the enzymatic activity of Atx of the mammalian is not significant. It is speculated that the increased release of neurotransmitter in this phase is induced by the interference of Atx with voltage-gated potassium channels. Measurements of ionic showed however that voltage-gated potassium channels are not affected by Atx. The third phase of the response of neuromuscular preparations to Atx, which corresponds to a complete and irreversible paralysis, is clearly dependent on the hydrolytic activity of the toxin. In addition to its presynaptic neurotoxicity, Atx shows an anticoagulant activity by binding with high affinity to activated coagulation factor X (F10) thus inhibiting the formation of the prothrombinase complex (FX/FV) and its activity (IC(50) is 240 nM). Surprisingly, Atx was discovered to bind intracellular proteins such as calmodulin (CaM), 14-3-3 proteins gamma (YWHAG) and epsilon (YWHAE), as well as R25, a mitochondrial integral membrane protein found in cerebral cortex. These findings raised a doubt about the dogma of the exclusively extracellular action of PLA2s, defended by the potential instability of these molecules in the reducing environment of the eukaryotic cytosol coupled with their possible inability to act as enzymes in this cellular compartment, due to too low concentration of calcium ions. This hypothesis was challenged efficiently by demonstrating the internalization of AtxA into a culture cells, but still remains to be directly demonstrated in vivo. PLA2 catalyzes the calcium-dependent hydrolysis of the 2-acyl groups in 3-sn-phosphoglycerides. The sequence is that of Basic phospholipase A2 ammodytoxin C from Vipera ammodytes ammodytes (Western sand viper).